A 472-amino-acid chain; its full sequence is 7-dimethylallyltryptophan synthase hasE (472 aa).

E138 is a binding site for L-tryptophan. 8 residues coordinate dimethylallyl diphosphate: R154, K239, Y241, K313, Y315, Y393, Y460, and Y464.

This sequence belongs to the tryptophan dimethylallyltransferase family. As to quaternary structure, homodimer.

The enzyme catalyses L-tryptophan + dimethylallyl diphosphate = 7-(3-methylbut-2-enyl)-L-tryptophan + diphosphate. It carries out the reaction an N-terminal L-tryptophanyl-L-alpha-aminoacyl-[peptide] + H2O = an N-terminal L-alpha-aminoacyl-[peptide] + L-tryptophan. The protein operates within secondary metabolite biosynthesis. Functionally, 7-dimethylallyltryptophan synthase; part of the gene cluster that mediates the biosynthesis of hexadehydro-astechrome (HAS), a tryptophan-derived iron(III)-complex that acts as a virulence factor in infected mice. Catalyzes the prenylation of L-tryptophan at the C-7 position of the indole moiety. The enzyme is specific for dimethylallyl diphosphate (DMAPP) as prenyl donor. Also accepts D-tryptophan, typtophan-derivatives with modifications at the side chain or the indole ring, and linear and cyclic dipeptides such as H-L-Trp-L-Gly-OH or cyclo-L-Trp-L-Gly as substrates, however with lower efficiency. Also has tryptophan aminopeptidase activity towards linear peptides with a tryptophanyl moiety at the N-terminus. Dipeptides are better substrates than peptides with 3 or more amino acids. Enzymatic rate constants however are much higher for the prenyltransferase activity than for the aminopeptidase activity. Within the hexadehydro-astechrome biosyntetic pathway, hasE catalyzes the prenylation of the hasD-tethered tryptophan or the resulting tethered Trp-Ala dipeptid. The HAS biosynthesis begins with the synthesis of a tethered Trp-Ala dipeptide by the NRPS hasD. The 7-dimethylallyltryptophan synthase hasE then catalyzes the prenylation of the hasD-tethered tryptophan or the resulting tethered Trp-Ala dipeptide at the C-7 position of the indole moiety. HAS biosynthesis continues via tethered intermediates with the succesive actions of the cytochrome P450 monooxygenase hasH, the O-methyltransferase hasC, and the FAD-linked oxidoreductase hasG. The resulting O-methylated diketopiperazine is then released from hasD. Finally, three O-methylated diketopiperazine molecules assemble in a trimeric complex with Fe(III) to produce hexadehydro-astechrome. The sequence is that of 7-dimethylallyltryptophan synthase hasE from Aspergillus fumigatus (strain CBS 144.89 / FGSC A1163 / CEA10) (Neosartorya fumigata).